The primary structure comprises 143 residues: Ribosome maturation factor RimP (143 aa).

It belongs to the RimP family.

It localises to the cytoplasm. Functionally, required for maturation of 30S ribosomal subunits. The sequence is that of Ribosome maturation factor RimP from Borrelia turicatae (strain 91E135).